The chain runs to 579 residues: Probable serine/threonine-protein kinase kinY (579 aa).

Residues 1–24 (MINGEQTMVEDELPDQGKPMSDES) are disordered. One can recognise a Protein kinase domain in the interval 32 to 309 (LKVGESIGSG…HVLKQLTSLF (278 aa)). Residues 38–46 (IGSGAYGIV) and K59 each bind ATP. D167 acts as the Proton acceptor in catalysis.

Belongs to the protein kinase superfamily. TKL Ser/Thr protein kinase family.

It carries out the reaction L-seryl-[protein] + ATP = O-phospho-L-seryl-[protein] + ADP + H(+). The enzyme catalyses L-threonyl-[protein] + ATP = O-phospho-L-threonyl-[protein] + ADP + H(+). The polypeptide is Probable serine/threonine-protein kinase kinY (kinY) (Dictyostelium discoideum (Social amoeba)).